A 29-amino-acid chain; its full sequence is Brevinin-2Td (29 aa).

A disulfide bridge links Cys23 with Cys29.

Belongs to the frog skin active peptide (FSAP) family. Brevinin subfamily. As to expression, expressed by the skin glands.

The protein localises to the secreted. Functionally, antibacterial activity against representative Gram-negative and Gram-positive bacteria. The chain is Brevinin-2Td from Rana temporaria (European common frog).